A 294-amino-acid polypeptide reads, in one-letter code: UDP-3-O-acyl-N-acetylglucosamine deacetylase (294 aa).

Residues His75, His232, and Asp236 each contribute to the Zn(2+) site. The active-site Proton donor is His259.

Belongs to the LpxC family. Requires Zn(2+) as cofactor.

It catalyses the reaction a UDP-3-O-[(3R)-3-hydroxyacyl]-N-acetyl-alpha-D-glucosamine + H2O = a UDP-3-O-[(3R)-3-hydroxyacyl]-alpha-D-glucosamine + acetate. Its pathway is glycolipid biosynthesis; lipid IV(A) biosynthesis; lipid IV(A) from (3R)-3-hydroxytetradecanoyl-[acyl-carrier-protein] and UDP-N-acetyl-alpha-D-glucosamine: step 2/6. In terms of biological role, catalyzes the hydrolysis of UDP-3-O-myristoyl-N-acetylglucosamine to form UDP-3-O-myristoylglucosamine and acetate, the committed step in lipid A biosynthesis. The protein is UDP-3-O-acyl-N-acetylglucosamine deacetylase of Campylobacter jejuni subsp. jejuni serotype O:23/36 (strain 81-176).